The following is a 212-amino-acid chain: Uridine kinase (212 aa).

Position 13-20 (13-20 (GGSGSGKT)) interacts with ATP.

The protein belongs to the uridine kinase family.

The protein localises to the cytoplasm. It carries out the reaction uridine + ATP = UMP + ADP + H(+). The catalysed reaction is cytidine + ATP = CMP + ADP + H(+). The protein operates within pyrimidine metabolism; CTP biosynthesis via salvage pathway; CTP from cytidine: step 1/3. It participates in pyrimidine metabolism; UMP biosynthesis via salvage pathway; UMP from uridine: step 1/1. This chain is Uridine kinase, found in Bacillus cereus (strain ATCC 10987 / NRS 248).